The sequence spans 358 residues: Aminomethyltransferase (358 aa).

This sequence belongs to the GcvT family. As to quaternary structure, the glycine cleavage system is composed of four proteins: P, T, L and H.

The catalysed reaction is N(6)-[(R)-S(8)-aminomethyldihydrolipoyl]-L-lysyl-[protein] + (6S)-5,6,7,8-tetrahydrofolate = N(6)-[(R)-dihydrolipoyl]-L-lysyl-[protein] + (6R)-5,10-methylene-5,6,7,8-tetrahydrofolate + NH4(+). In terms of biological role, the glycine cleavage system catalyzes the degradation of glycine. This is Aminomethyltransferase from Francisella tularensis subsp. holarctica (strain FTNF002-00 / FTA).